A 1196-amino-acid polypeptide reads, in one-letter code: DNA excision repair protein ERCC-5 homolog (1196 aa).

Residues Met-1–Gly-78 form an N-domain region. A Mg(2+)-binding site is contributed by Asp-30. The DNA-binding; may bind to the undamaged single-strand DNA of the DNA repair bubble stretch occupies residues Ile-31–Phe-67. A Mg(2+)-binding site is contributed by Asp-77. The spacer region stretch occupies residues Glu-79–Val-818. Disordered stretches follow at residues Pro-152–Lys-176, Lys-302–Gln-321, Gln-629–Met-661, and Ala-722–Ser-758. Over residues Glu-154 to Glu-168 the composition is skewed to acidic residues. Residues Pro-311–Gln-321 are compositionally biased toward polar residues. Positions Ala-722 to Gln-731 are enriched in polar residues. Positions Pro-734 to Asp-755 are enriched in basic and acidic residues. The interval Ala-819–Phe-914 is I-domain. Mg(2+) contacts are provided by Glu-822, Glu-824, Asp-843, and Asp-845. Residues His-853–Gln-869 form a DNA-binding; may bind to the undamaged single-strand DNA of the DNA repair bubble region. The interval Arg-881–Glu-913 is DNA-binding; H2TH (helix-2turn-helix) motif which binds double-stranded DNA. Asp-894 contributes to the Mg(2+) binding site. The segment at Thr-945–Leu-951 is DNA-binding; may bind double-stranded DNA. A disordered region spans residues Cys-1075–Lys-1196. The short motif at Arg-1079–Lys-1095 is the Nuclear localization signal 1 element. The span at Ser-1119–Ser-1130 shows a compositional bias: low complexity. The segment covering Lys-1142 to Val-1158 has biased composition (polar residues). The Nuclear localization signal 2 motif lies at Phe-1179–Lys-1196.

This sequence belongs to the XPG/RAD2 endonuclease family. XPG subfamily. As to quaternary structure, monomer. Homodimer. It depends on Mg(2+) as a cofactor.

The protein resides in the nucleus. It is found in the chromosome. Functionally, single-stranded structure-specific DNA endonuclease involved in DNA excision repair. Makes the 3'incision in DNA nucleotide excision repair (NER). Binds and bends DNA repair bubble substrate and breaks base stacking at the single-strand/double-strand DNA junction of the DNA bubble. Plays a role in base excision repair (BER) by promoting the binding of DNA glycosylase to its substrate and increasing DNA glycosylase catalytic activity that removes oxidized pyrimidines from DNA. Involved in transcription-coupled nucleotide excision repair (TCR) which allows RNA polymerase II-blocking lesions to be rapidly removed from the transcribed strand of active genes. Required for DNA replication fork maintenance and preservation of genomic stability. Involved in homologous recombination repair (HRR) induced by DNA replication stress. During HRR, binds to the replication fork with high specificity and stabilizes it. This is DNA excision repair protein ERCC-5 homolog (ercc5) from Xenopus laevis (African clawed frog).